The chain runs to 380 residues: Oocyte-specific homeobox protein 4 (380 aa).

5 disordered regions span residues 1–25 (MSKD…SFLV), 43–95 (VTPT…RKCR), 152–182 (KSSQ…FAAS), 234–303 (PRQK…CQTP), and 339–380 (TRSK…SSAY). The span at 43–53 (VTPTRPLQSSH) shows a compositional bias: polar residues. Residues 54 to 67 (SVHERDLHQKDSQE) are compositionally biased toward basic and acidic residues. Residues 94–153 (CRKERTVYSKEQKCLLQEHFHQCQNPDLEQRKALALLIGVTEYKIQTWFKNRRAKECRKS) constitute a DNA-binding region (homeobox). Residues 234–250 (PRQKCRELSREPGHLSS) show a composition bias toward basic and acidic residues. Residues 260-271 (SSPSPAAGAESS) are compositionally biased toward low complexity. 2 stretches are compositionally biased toward polar residues: residues 278–302 (LSLS…MCQT) and 351–380 (NTVQ…SSAY).

Belongs to the paired homeobox family. Obox subfamily. Specifically expressed in early embryos.

It is found in the nucleus. In terms of biological role, transcription factor required for zygotic genome activation (ZGA), a critical event in early embryonic development during which the developmental control passes from maternally provided mRNAs to the expression of the zygotic genome after fertilization. Cannot compensate for loss of other members of the Obox family, suggesting that its function differs from other Obox family members. May regulate expression of histone genes in embryonic stem cells. Also involved in completion of meiosis of oocytes during the meiosis-I/meiosis-II transition. Required to maintain the nuclear membrane of the germinal vesicle in oocytes. This chain is Oocyte-specific homeobox protein 4, found in Mus musculus (Mouse).